The chain runs to 412 residues: MKIYLVGGAVRDALLGLPVKDRDWVVVGSTPQEMLDAGYQQVGRDFPVFLHPQTHEEYALARTERKSGSGYTGFTCYAAPDVTLEDDLKRRDLTINALAQDDNGEIIDPYNGLGDLQNRLLRHVSPAFGEDPLRVLRVARFAARYAHLSFRIADETLALMREMTHAGELEHLTPERVWKETENALTTRNPQVFFQVLRDCGALRVLFPEIDALFGVPAPARWHPEIDTGIHTLMTLSMAAMLSPQVDVRFATLCHDLGKGLTPPELWPRHHGHGPAGVKLVEQLCQRLRVPNEILDLARLVAEFHDLIHTFPMLNPKTIVKLFDSIDAWRKPQRVEQLALTSEADVRGRTGFESADYPQGRWLREAWEVAQSVPTKAVVEAGFKGVEIREELTRRRIAAVASWKEQRCPKPD.

Residues Gly-8 and Arg-11 each contribute to the ATP site. 2 residues coordinate CTP: Gly-8 and Arg-11. The Mg(2+) site is built by Asp-21 and Asp-23. Arg-91, Arg-137, and Arg-140 together coordinate ATP. CTP contacts are provided by Arg-91, Arg-137, and Arg-140. The HD domain occupies 228–329 (TGIHTLMTLS…VKLFDSIDAW (102 aa)).

Belongs to the tRNA nucleotidyltransferase/poly(A) polymerase family. Bacterial CCA-adding enzyme type 1 subfamily. In terms of assembly, monomer. Can also form homodimers and oligomers. Mg(2+) is required as a cofactor. The cofactor is Ni(2+).

It catalyses the reaction a tRNA precursor + 2 CTP + ATP = a tRNA with a 3' CCA end + 3 diphosphate. The enzyme catalyses a tRNA with a 3' CCA end + 2 CTP + ATP = a tRNA with a 3' CCACCA end + 3 diphosphate. Its function is as follows. Catalyzes the addition and repair of the essential 3'-terminal CCA sequence in tRNAs without using a nucleic acid template. Adds these three nucleotides in the order of C, C, and A to the tRNA nucleotide-73, using CTP and ATP as substrates and producing inorganic pyrophosphate. tRNA 3'-terminal CCA addition is required both for tRNA processing and repair. Also involved in tRNA surveillance by mediating tandem CCA addition to generate a CCACCA at the 3' terminus of unstable tRNAs. While stable tRNAs receive only 3'-terminal CCA, unstable tRNAs are marked with CCACCA and rapidly degraded. The sequence is that of Multifunctional CCA protein from Escherichia coli O6:H1 (strain CFT073 / ATCC 700928 / UPEC).